Consider the following 393-residue polypeptide: Phosphoglycerate kinase (393 aa).

Residues 21-23, Arg36, 59-62, Arg113, and Arg146 contribute to the substrate site; these read DLN and HLGR. ATP-binding positions include Lys197, Glu319, and 345-348; that span reads GGDT.

Belongs to the phosphoglycerate kinase family. As to quaternary structure, monomer.

It is found in the cytoplasm. The enzyme catalyses (2R)-3-phosphoglycerate + ATP = (2R)-3-phospho-glyceroyl phosphate + ADP. It participates in carbohydrate degradation; glycolysis; pyruvate from D-glyceraldehyde 3-phosphate: step 2/5. The polypeptide is Phosphoglycerate kinase (Nitratidesulfovibrio vulgaris (strain ATCC 29579 / DSM 644 / CCUG 34227 / NCIMB 8303 / VKM B-1760 / Hildenborough) (Desulfovibrio vulgaris)).